We begin with the raw amino-acid sequence, 149 residues long: Large ribosomal subunit protein bL9 (149 aa).

Belongs to the bacterial ribosomal protein bL9 family.

Functionally, binds to the 23S rRNA. This Thermotoga petrophila (strain ATCC BAA-488 / DSM 13995 / JCM 10881 / RKU-1) protein is Large ribosomal subunit protein bL9.